A 308-amino-acid chain; its full sequence is 4-hydroxy-3-methylbut-2-enyl diphosphate reductase (308 aa).

Cysteine 12 lines the [4Fe-4S] cluster pocket. 2 residues coordinate (2E)-4-hydroxy-3-methylbut-2-enyl diphosphate: histidine 41 and histidine 74. Positions 41 and 74 each coordinate dimethylallyl diphosphate. Histidine 41 and histidine 74 together coordinate isopentenyl diphosphate. A [4Fe-4S] cluster-binding site is contributed by cysteine 96. Residue histidine 124 coordinates (2E)-4-hydroxy-3-methylbut-2-enyl diphosphate. Dimethylallyl diphosphate is bound at residue histidine 124. Histidine 124 is a binding site for isopentenyl diphosphate. Glutamate 126 functions as the Proton donor in the catalytic mechanism. Threonine 166 serves as a coordination point for (2E)-4-hydroxy-3-methylbut-2-enyl diphosphate. Residue cysteine 196 participates in [4Fe-4S] cluster binding. (2E)-4-hydroxy-3-methylbut-2-enyl diphosphate is bound by residues serine 224, serine 225, asparagine 226, and serine 268. 4 residues coordinate dimethylallyl diphosphate: serine 224, serine 225, asparagine 226, and serine 268. Isopentenyl diphosphate contacts are provided by serine 224, serine 225, asparagine 226, and serine 268.

It belongs to the IspH family. The cofactor is [4Fe-4S] cluster.

The catalysed reaction is isopentenyl diphosphate + 2 oxidized [2Fe-2S]-[ferredoxin] + H2O = (2E)-4-hydroxy-3-methylbut-2-enyl diphosphate + 2 reduced [2Fe-2S]-[ferredoxin] + 2 H(+). The enzyme catalyses dimethylallyl diphosphate + 2 oxidized [2Fe-2S]-[ferredoxin] + H2O = (2E)-4-hydroxy-3-methylbut-2-enyl diphosphate + 2 reduced [2Fe-2S]-[ferredoxin] + 2 H(+). It participates in isoprenoid biosynthesis; dimethylallyl diphosphate biosynthesis; dimethylallyl diphosphate from (2E)-4-hydroxy-3-methylbutenyl diphosphate: step 1/1. Its pathway is isoprenoid biosynthesis; isopentenyl diphosphate biosynthesis via DXP pathway; isopentenyl diphosphate from 1-deoxy-D-xylulose 5-phosphate: step 6/6. In terms of biological role, catalyzes the conversion of 1-hydroxy-2-methyl-2-(E)-butenyl 4-diphosphate (HMBPP) into a mixture of isopentenyl diphosphate (IPP) and dimethylallyl diphosphate (DMAPP). Acts in the terminal step of the DOXP/MEP pathway for isoprenoid precursor biosynthesis. In Vesicomyosocius okutanii subsp. Calyptogena okutanii (strain HA), this protein is 4-hydroxy-3-methylbut-2-enyl diphosphate reductase.